A 115-amino-acid polypeptide reads, in one-letter code: NADH-ubiquinone oxidoreductase chain 3 (115 aa).

Helical transmembrane passes span 3 to 23, 55 to 75, and 86 to 106; these read LLII…IAFW, FFLV…LLPL, and TMMA…SYEW.

It belongs to the complex I subunit 3 family. As to quaternary structure, core subunit of respiratory chain NADH dehydrogenase (Complex I) which is composed of 45 different subunits. Interacts with TMEM186. Interacts with TMEM242.

The protein resides in the mitochondrion inner membrane. The enzyme catalyses a ubiquinone + NADH + 5 H(+)(in) = a ubiquinol + NAD(+) + 4 H(+)(out). Core subunit of the mitochondrial membrane respiratory chain NADH dehydrogenase (Complex I) which catalyzes electron transfer from NADH through the respiratory chain, using ubiquinone as an electron acceptor. Essential for the catalytic activity of complex I. In Rattus norvegicus (Rat), this protein is NADH-ubiquinone oxidoreductase chain 3.